The chain runs to 176 residues: Peptidyl-prolyl cis-trans isomerase cyp6 (176 aa).

One can recognise a PPIase cyclophilin-type domain in the interval 10 to 173 (FFDIAVNGQH…AKIEITDCGE (164 aa)).

The protein belongs to the cyclophilin-type PPIase family.

The enzyme catalyses [protein]-peptidylproline (omega=180) = [protein]-peptidylproline (omega=0). Functionally, PPIases accelerate the folding of proteins. It catalyzes the cis-trans isomerization of proline imidic peptide bonds in oligopeptides. In Rhizopus delemar (strain RA 99-880 / ATCC MYA-4621 / FGSC 9543 / NRRL 43880) (Mucormycosis agent), this protein is Peptidyl-prolyl cis-trans isomerase cyp6 (cyp6).